A 137-amino-acid chain; its full sequence is Large ribosomal subunit protein uL16 (137 aa).

The protein belongs to the universal ribosomal protein uL16 family. As to quaternary structure, part of the 50S ribosomal subunit.

In terms of biological role, binds 23S rRNA and is also seen to make contacts with the A and possibly P site tRNAs. The chain is Large ribosomal subunit protein uL16 from Rhodopseudomonas palustris (strain HaA2).